Here is a 96-residue protein sequence, read N- to C-terminus: Progonadoliberin-1 (96 aa).

Positions 1 to 26 are cleaved as a signal peptide; the sequence is MHRKMAVKTLSVWLLLVGTLVPQHCC. The residue at position 27 (glutamine 27) is a Pyrrolidone carboxylic acid. Glycine 36 is subject to Glycine amide.

This sequence belongs to the GnRH family. As to expression, preoptic area of the brain.

It is found in the secreted. Functionally, stimulates the secretion of gonadotropins. The sequence is that of Progonadoliberin-1 (gnrh1) from Verasper moseri (Barfin flounder).